Consider the following 234-residue polypeptide: uncharacterized protein (234 aa).

A run of 3 helical transmembrane segments spans residues 32–52 (GLRTNTLVAIGAALFVIVSVL), 62–82 (IPAQIVSGIGFLAGGVILKEG), and 106–126 (QGLFSEAVLGSMMVLVANIAL).

Belongs to the MgtC/SapB family.

It localises to the cell membrane. This is an uncharacterized protein from Synechocystis sp. (strain ATCC 27184 / PCC 6803 / Kazusa).